The chain runs to 576 residues: Probable vesicular glutamate transporter eat-4 (576 aa).

Residues Met1 to Arg69 are Cytoplasmic-facing. The segment at Ala25–Pro46 is disordered. A compositionally biased stretch (polar residues) spans Gln36–Pro46. The helical transmembrane segment at Trp70–Phe90 threads the bilayer. Over Gly91–Ser121 the chain is Extracellular. N-linked (GlcNAc...) asparagine glycans are attached at residues Asn100 and Asn114. The chain crosses the membrane as a helical span at residues Val122 to Ala142. At Ala143–Leu150 the chain is on the cytoplasmic side. The helical transmembrane segment at Phe151–Val171 threads the bilayer. Residues Lys172 to Asp174 lie on the Extracellular side of the membrane. Residues Tyr175–Met195 form a helical membrane-spanning segment. At His196–Thr213 the chain is on the cytoplasmic side. Residues Thr214–Val234 traverse the membrane as a helical segment. Over Ser235–Trp239 the chain is Extracellular. A helical membrane pass occupies residues Ala240–Val260. The Cytoplasmic segment spans residues Thr261–Lys305. Residues Pro306 to Leu325 form a helical membrane-spanning segment. Residues Gln326 to Gly344 lie on the Extracellular side of the membrane. A helical membrane pass occupies residues Leu345–Ala365. At Asp366–Lys381 the chain is on the cytoplasmic side. Residues Ile382 to Thr402 traverse the membrane as a helical segment. Residues Ser403–Thr406 are Extracellular-facing. Residues Ala407 to Val427 form a helical membrane-spanning segment. Residues Asn428–Ala437 lie on the Cytoplasmic side of the membrane. A helical transmembrane segment spans residues Ala438–Val458. Over Thr459–Thr471 the chain is Extracellular. A helical transmembrane segment spans residues Ser472–Ala492. Topologically, residues Ser493–Trp576 are cytoplasmic.

It belongs to the major facilitator superfamily. Sodium/anion cotransporter family. VGLUT subfamily. In terms of tissue distribution, expressed in neurons of the pharynx and the extrapharyngeal nervous system. Highly expressed in male PHC sensory neurons.

It is found in the cell membrane. The protein resides in the synapse. Its function is as follows. Required for glutamatergic synaptic transmission. In AWB and AWC sensory neurons, required for the detection of preferred food sources, probably via glutamatergic neurotransmission from sensory neurons. Negatively regulates the turning step of male mating behavior. This chain is Probable vesicular glutamate transporter eat-4, found in Caenorhabditis elegans.